The sequence spans 138 residues: Protein Turandot B (138 aa).

The first 21 residues, 1–21 (MNFKTSLICFALLLIGTLCSA), serve as a signal peptide directing secretion.

It belongs to the Turandot family.

Its subcellular location is the secreted. A humoral factor that may play a role in stress tolerance. This Drosophila melanogaster (Fruit fly) protein is Protein Turandot B.